A 367-amino-acid chain; its full sequence is Peptide chain release factor 2 (367 aa).

An N5-methylglutamine modification is found at Gln-254.

The protein belongs to the prokaryotic/mitochondrial release factor family. Methylated by PrmC. Methylation increases the termination efficiency of RF2.

The protein resides in the cytoplasm. Functionally, peptide chain release factor 2 directs the termination of translation in response to the peptide chain termination codons UGA and UAA. In Burkholderia mallei (strain ATCC 23344), this protein is Peptide chain release factor 2.